The primary structure comprises 236 residues: E3 ubiquitin-protein ligase RNF187 (236 aa).

Residues 12-53 (CALCQRAPREPVRADCGHRFCRACVVRFWAEEDGPFPCPECA) form an RING-type zinc finger. Arg-98 and Arg-109 each carry asymmetric dimethylarginine; by PRMT1. Residue Lys-195 forms a Glycyl lysine isopeptide (Lys-Gly) (interchain with G-Cter in ubiquitin) linkage. Residue Ser-200 is modified to Phosphoserine. Residues Lys-224 and Lys-225 each participate in a glycyl lysine isopeptide (Lys-Gly) (interchain with G-Cter in ubiquitin) cross-link.

As to quaternary structure, homodimer. Interacts with JUN, independently of JUN phosphorylation. Interacts (via C-terminus) with TRIM7. Post-translationally, ubiquitinated; undergoes 'Lys-48'-linked autoubiquitination in the absence of growth factors and MAP3K1-induced 'Lys-63'-linked polyubiquitination. 'Lys-48'-autoubiquitination leads to degradation by the proteasome, while MAP3K1-induced 'Lys-63'-linked polyubiquitination results in the stabilization of the protein. 'Lys-48'- and 'Lys-63'-linked polyubiquitinations occur most probably on the same 3 C-terminal lysine residues (Lys-195, Lys-224 and Lys-225) and are thus mutually exclusive. Other sites of ubiquitination are not excluded. 'Lys-63'-linked polyubiquitination by TRIM7 in response to growth factor signaling via the MEK/ERK pathway enhances protein stability. In terms of processing, arginine methylation by PRMT1 stabilizes RNF187 by facilitating K63-linked ubiquitin chain formation, and enables dimerization, c-Jun interaction and subsequent AP1 target gene expression.

It localises to the cytoplasm. The protein resides in the nucleus. It carries out the reaction S-ubiquitinyl-[E2 ubiquitin-conjugating enzyme]-L-cysteine + [acceptor protein]-L-lysine = [E2 ubiquitin-conjugating enzyme]-L-cysteine + N(6)-ubiquitinyl-[acceptor protein]-L-lysine.. Its pathway is protein modification; protein ubiquitination. Functionally, E3 ubiquitin-protein ligase that acts as a coactivator of JUN-mediated gene activation in response to growth factor signaling via the MAP3K1 pathway, independently from MAPK8. The polypeptide is E3 ubiquitin-protein ligase RNF187 (Rnf187) (Mus musculus (Mouse)).